The sequence spans 178 residues: Adenine phosphoribosyltransferase (178 aa).

This sequence belongs to the purine/pyrimidine phosphoribosyltransferase family. As to quaternary structure, homodimer.

The protein localises to the cytoplasm. The enzyme catalyses AMP + diphosphate = 5-phospho-alpha-D-ribose 1-diphosphate + adenine. It functions in the pathway purine metabolism; AMP biosynthesis via salvage pathway; AMP from adenine: step 1/1. Catalyzes a salvage reaction resulting in the formation of AMP, that is energically less costly than de novo synthesis. In Cereibacter sphaeroides (strain ATCC 17023 / DSM 158 / JCM 6121 / CCUG 31486 / LMG 2827 / NBRC 12203 / NCIMB 8253 / ATH 2.4.1.) (Rhodobacter sphaeroides), this protein is Adenine phosphoribosyltransferase.